The chain runs to 812 residues: Lon protease (812 aa).

Positions 22-215 (YAVLPLRDIV…KALSFMEAEI (194 aa)) constitute a Lon N-terminal domain. An ATP-binding site is contributed by 367 to 374 (GPPGVGKT). The 182-residue stretch at 602–783 (EDQVGVVTGL…GEVLKHALVR (182 aa)) folds into the Lon proteolytic domain. Catalysis depends on residues Ser689 and Lys732. Residues 787–812 (PIEWTEQENPTAVPPVEDEAGASLAH) form a disordered region.

This sequence belongs to the peptidase S16 family. In terms of assembly, homohexamer. Organized in a ring with a central cavity.

The protein resides in the cytoplasm. It catalyses the reaction Hydrolysis of proteins in presence of ATP.. Its function is as follows. ATP-dependent serine protease that mediates the selective degradation of mutant and abnormal proteins as well as certain short-lived regulatory proteins. Required for cellular homeostasis and for survival from DNA damage and developmental changes induced by stress. Degrades polypeptides processively to yield small peptide fragments that are 5 to 10 amino acids long. Binds to DNA in a double-stranded, site-specific manner. This Brucella melitensis biotype 1 (strain ATCC 23456 / CCUG 17765 / NCTC 10094 / 16M) protein is Lon protease.